Here is a 203-residue protein sequence, read N- to C-terminus: ATP synthase subunit b (203 aa).

Residues phenylalanine 14–serine 34 traverse the membrane as a helical segment.

This sequence belongs to the ATPase B chain family. F-type ATPases have 2 components, F(1) - the catalytic core - and F(0) - the membrane proton channel. F(1) has five subunits: alpha(3), beta(3), gamma(1), delta(1), epsilon(1). F(0) has three main subunits: a(1), b(2) and c(10-14). The alpha and beta chains form an alternating ring which encloses part of the gamma chain. F(1) is attached to F(0) by a central stalk formed by the gamma and epsilon chains, while a peripheral stalk is formed by the delta and b chains.

Its subcellular location is the cell inner membrane. In terms of biological role, f(1)F(0) ATP synthase produces ATP from ADP in the presence of a proton or sodium gradient. F-type ATPases consist of two structural domains, F(1) containing the extramembraneous catalytic core and F(0) containing the membrane proton channel, linked together by a central stalk and a peripheral stalk. During catalysis, ATP synthesis in the catalytic domain of F(1) is coupled via a rotary mechanism of the central stalk subunits to proton translocation. Its function is as follows. Component of the F(0) channel, it forms part of the peripheral stalk, linking F(1) to F(0). The polypeptide is ATP synthase subunit b (Syntrophobacter fumaroxidans (strain DSM 10017 / MPOB)).